A 346-amino-acid chain; its full sequence is MDQYCILGRIGEGAHGIVFKAKHVETGEIVALKKVALRRLEDGFPNQALREIKALQEMEDNQYVVQLKAVFPHGGGFVLAFEFMLSDLAEVVRHAQRPLAQAQVKSYLQMLLKGVAFCHANNIVHRDLKPANLLISASGQLKIADFGLARVFSPDGSRLYTHQVATRWYRAPELLYGARQYDQGVDLWSVGCIMGELLNGSPLFPGKNDIEQLCYVLRILGTPNPQVWPELTELPDYNKISFKEQVPMPLEEVLPDVSPQALDLLGQFLLYPPHQRIAASKALLHQYFFTAPLPAHPSELPIPQRLGGPAPKAHPGPPHIHDFHVDRPLEESLLNPELIRPFILEG.

One can recognise a Protein kinase domain in the interval 4 to 288; it reads YCILGRIGEG…ASKALLHQYF (285 aa). ATP is bound by residues 10–18 and lysine 33; that span reads IGEGAHGIV. Aspartate 127 serves as the catalytic Proton acceptor.

Belongs to the protein kinase superfamily. CMGC Ser/Thr protein kinase family. CDC2/CDKX subfamily. In terms of assembly, monomer. Interacts with TBC1D32. Interacts with MAK.

The protein resides in the nucleus. It localises to the cytoplasm. The protein localises to the cell projection. It is found in the cilium. The enzyme catalyses L-seryl-[protein] + ATP = O-phospho-L-seryl-[protein] + ADP + H(+). It carries out the reaction L-threonyl-[protein] + ATP = O-phospho-L-threonyl-[protein] + ADP + H(+). Functionally, required for high-level Shh responses in the developing neural tube. Together with TBC1D32, controls the structure of the primary cilium by coordinating assembly of the ciliary membrane and axoneme, allowing GLI2 to be properly activated in response to SHH signaling. Involved in cell growth. Activates CDK2, a kinase involved in the control of the cell cycle, by phosphorylating residue 'Thr-160'. This Homo sapiens (Human) protein is Cyclin-dependent kinase 20 (CDK20).